Consider the following 428-residue polypeptide: Hercynine oxygenase (428 aa).

Fe cation is bound at residue histidine 46. 82-85 (RASR) lines the gamma-L-glutamyl-L-cysteine pocket. Fe cation-binding residues include histidine 129 and histidine 133. Residues aspartate 411 and arginine 415 each contribute to the gamma-L-glutamyl-L-cysteine site.

The protein belongs to the EgtB family. In terms of assembly, monomer. Fe(2+) serves as cofactor.

The catalysed reaction is gamma-L-glutamyl-L-cysteine + hercynine + O2 = gamma-L-glutamyl-hercynylcysteine S-oxide + H2O. Its pathway is amino-acid biosynthesis; ergothioneine biosynthesis. In terms of biological role, catalyzes the oxidative sulfurization of hercynine (N-alpha,N-alpha,N-alpha-trimethyl-L-histidine) into hercynyl-gamma-L-glutamyl-L-cysteine sulfoxide, a step in the biosynthesis pathway of ergothioneine. Cannot use the alternative thiols cysteine, N-acetylcysteine, or glutathione instead of gamma-glutamylcysteine as substrates, and histidine is a poor sulfur acceptor substrate compared to hercynine. The protein is Hercynine oxygenase of Mycolicibacterium smegmatis (strain ATCC 700084 / mc(2)155) (Mycobacterium smegmatis).